Reading from the N-terminus, the 1715-residue chain is Ubiquitin carboxyl-terminal hydrolase 32 (1715 aa).

2 EF-hand domains span residues 161 to 196 (IPKNALAGLFNAFDENRDGHIDFKELCCGVSAACRG) and 197 to 232 (PGVERTRFCFKIFDVDRDGVLSHDETLQMINVLLLV). Ca(2+)-binding residues include aspartate 174, asparagine 176, aspartate 178, histidine 180, glutamate 185, aspartate 210, aspartate 212, aspartate 214, and glutamate 221. The DUSP domain maps to 314–492 (QCKHMENDIV…DNLPLPRQVI (179 aa)). The disordered stretch occupies residues 393-429 (QHDSYSLGSGTGSASGSGSASSGISAGRHCGPVRPGP). Over residues 408–419 (GSGSASSGISAG) the composition is skewed to low complexity. The 999-residue stretch at 677–1675 (TGLHNLGNTC…AAYLLFYERK (999 aa)) folds into the USP domain. Residue cysteine 686 is the Nucleophile of the active site. 2 stretches are compositionally biased toward polar residues: residues 1103–1126 (TESNTSSMSYTNHSGENSMESSLT) and 1150–1164 (YRTSPNDSSGLSTGH). 2 disordered regions span residues 1103-1213 (TESN…PHKA) and 1536-1569 (DEIDAPSKEVKEELPNQTGSTKATASPPPTGNIL). The span at 1171 to 1180 (DVDEQAEEGN) shows a compositional bias: acidic residues. Polar residues predominate over residues 1188-1209 (DQITTSQPETSSGVYSRRSSQP). Over residues 1540-1549 (APSKEVKEEL) the composition is skewed to basic and acidic residues. Over residues 1550 to 1559 (PNQTGSTKAT) the composition is skewed to polar residues. Residue histidine 1633 is the Proton acceptor of the active site.

The protein belongs to the peptidase C19 family. USP20/USP33 subfamily.

The catalysed reaction is Thiol-dependent hydrolysis of ester, thioester, amide, peptide and isopeptide bonds formed by the C-terminal Gly of ubiquitin (a 76-residue protein attached to proteins as an intracellular targeting signal).. Its function is as follows. Deubiquitinating enzyme that acts as an inhibitor of mitophagy probably by counteracting the action of park. Possibly functions by hydrolyzing ubiquitin attached by park on target proteins, thereby reducing park's ability to drive mitophagy. The sequence is that of Ubiquitin carboxyl-terminal hydrolase 32 from Drosophila melanogaster (Fruit fly).